The primary structure comprises 108 residues: Parvalbumin beta 2 (108 aa).

Serine 2 is subject to N-acetylserine. 2 consecutive EF-hand domains span residues 38-73 and 77-108; these read KSSD…FSAS and LTDA…MIKG. Aspartate 51, aspartate 53, serine 55, phenylalanine 57, glutamate 59, glutamate 62, aspartate 90, aspartate 92, aspartate 94, methionine 96, and glutamate 101 together coordinate Ca(2+).

The protein belongs to the parvalbumin family.

Functionally, in muscle, parvalbumin is thought to be involved in relaxation after contraction. It binds two calcium ions. The sequence is that of Parvalbumin beta 2 from Salmo salar (Atlantic salmon).